The chain runs to 820 residues: 1,4-alpha-glucan-branching enzyme, chloroplastic/amyloplastic (820 aa).

The segment covering 1-20 (MLCLTSSSSSAPAPLLPSLA) has biased composition (low complexity). Residues 1–28 (MLCLTSSSSSAPAPLLPSLADRPSPGIA) form a disordered region. Residues 1–64 (MLCLTSSSSS…SVPATARKNK (64 aa)) constitute a chloroplast transit peptide. Trp153 and Lys188 together coordinate (1,4-alpha-D-glucosyl)n. Asp409 acts as the Nucleophile in catalysis. Glu464 (proton donor) is an active-site residue.

Belongs to the glycosyl hydrolase 13 family. GlgB subfamily. As to quaternary structure, monomer.

It localises to the plastid. The protein localises to the chloroplast. Its subcellular location is the amyloplast. It catalyses the reaction Transfers a segment of a (1-&gt;4)-alpha-D-glucan chain to a primary hydroxy group in a similar glucan chain.. Its pathway is glycan biosynthesis; starch biosynthesis. Functionally, catalyzes the formation of the alpha-1,6-glucosidic linkages in starch by scission of a 1,4-alpha-linked oligosaccharide from growing alpha-1,4-glucan chains and the subsequent attachment of the oligosaccharide to the alpha-1,6 position. In Oryza sativa subsp. japonica (Rice), this protein is 1,4-alpha-glucan-branching enzyme, chloroplastic/amyloplastic (SBE1).